We begin with the raw amino-acid sequence, 572 residues long: Proline--tRNA ligase (572 aa).

This sequence belongs to the class-II aminoacyl-tRNA synthetase family. ProS type 1 subfamily. In terms of assembly, homodimer.

The protein localises to the cytoplasm. The catalysed reaction is tRNA(Pro) + L-proline + ATP = L-prolyl-tRNA(Pro) + AMP + diphosphate. Catalyzes the attachment of proline to tRNA(Pro) in a two-step reaction: proline is first activated by ATP to form Pro-AMP and then transferred to the acceptor end of tRNA(Pro). As ProRS can inadvertently accommodate and process non-cognate amino acids such as alanine and cysteine, to avoid such errors it has two additional distinct editing activities against alanine. One activity is designated as 'pretransfer' editing and involves the tRNA(Pro)-independent hydrolysis of activated Ala-AMP. The other activity is designated 'posttransfer' editing and involves deacylation of mischarged Ala-tRNA(Pro). The misacylated Cys-tRNA(Pro) is not edited by ProRS. This Salmonella newport (strain SL254) protein is Proline--tRNA ligase.